The primary structure comprises 357 residues: Chorismate synthase (357 aa).

Arg47 contributes to the NADP(+) binding site. Residues 123–125 (RAS), Gly281, 296–300 (KPTSS), and Arg324 contribute to the FMN site.

It belongs to the chorismate synthase family. As to quaternary structure, homotetramer. FMNH2 serves as cofactor.

It carries out the reaction 5-O-(1-carboxyvinyl)-3-phosphoshikimate = chorismate + phosphate. It functions in the pathway metabolic intermediate biosynthesis; chorismate biosynthesis; chorismate from D-erythrose 4-phosphate and phosphoenolpyruvate: step 7/7. In terms of biological role, catalyzes the anti-1,4-elimination of the C-3 phosphate and the C-6 proR hydrogen from 5-enolpyruvylshikimate-3-phosphate (EPSP) to yield chorismate, which is the branch point compound that serves as the starting substrate for the three terminal pathways of aromatic amino acid biosynthesis. This reaction introduces a second double bond into the aromatic ring system. The protein is Chorismate synthase of Chlamydia trachomatis serovar A (strain ATCC VR-571B / DSM 19440 / HAR-13).